We begin with the raw amino-acid sequence, 1481 residues long: Protein shortage in chiasmata 1 ortholog (1481 aa).

Disordered stretches follow at residues 479–498 (TDVH…EKEV) and 512–560 (KSKV…IQAS). Over residues 513–531 (SKVEANPKNDQEPEARIMQ) the composition is skewed to basic and acidic residues. The span at 543–560 (SSQVPSAESASSSQIQAS) shows a compositional bias: low complexity.

It belongs to the XPF family. Highly divergent. As to quaternary structure, interacts with TEX11. Interacts with SPO16. In terms of tissue distribution, mainly expressed in adult testis.

Its subcellular location is the chromosome. ATPase required during meiosis for the formation of crossover recombination intermediates. Binds DNA: preferentially binds to single-stranded DNA and DNA branched structures. Does not show nuclease activity in vitro, but shows ATPase activity, which is stimulated by the presence of single-stranded DNA. Plays a key role in homologous recombination and crossing-over in meiotic prophase I in male and female germ cells. Required for proper synaptonemal complex assembly and homologous chromosome pairing. Required for recruitment of TEX11 and MSH4 to recombination intermediates. The chain is Protein shortage in chiasmata 1 ortholog from Mus musculus (Mouse).